The following is a 314-amino-acid chain: Tyrosine recombinase XerC (314 aa).

In terms of domain architecture, Core-binding (CB) spans 1 to 85 (MNEQVEAFLR…AVKSFFTFLT (85 aa)). In terms of domain architecture, Tyr recombinase spans 106–291 (DLPRALTPRQ…NHESSHTPHA (186 aa)). Residues Arg147, Lys171, His243, Arg246, and His269 contribute to the active site. The active-site O-(3'-phospho-DNA)-tyrosine intermediate is the Tyr278. The segment at 284-314 (ESSHTPHAHPAPRASEVNGVRDEQALVPEEK) is disordered. The segment covering 302-314 (GVRDEQALVPEEK) has biased composition (basic and acidic residues).

This sequence belongs to the 'phage' integrase family. XerC subfamily. Forms a cyclic heterotetrameric complex composed of two molecules of XerC and two molecules of XerD.

It is found in the cytoplasm. Functionally, site-specific tyrosine recombinase, which acts by catalyzing the cutting and rejoining of the recombining DNA molecules. The XerC-XerD complex is essential to convert dimers of the bacterial chromosome into monomers to permit their segregation at cell division. It also contributes to the segregational stability of plasmids. This is Tyrosine recombinase XerC from Roseiflexus castenholzii (strain DSM 13941 / HLO8).